A 160-amino-acid polypeptide reads, in one-letter code: Protein cornichon homolog 2 (160 aa).

Residues 1–10 (MAFTFAAFCY) lie on the Cytoplasmic side of the membrane. The helical transmembrane segment at 11–31 (MLTLVLCAALIFFVIWQIIAF) threads the bilayer. The Lumenal segment spans residues 32–72 (DELRTDFKNPIDQSNPTRARERILNIERICNLLRRLVVPEY). The chain crosses the membrane as a helical span at residues 73–93 (SIHGLFCLMFMCAGEWVTLGL). Residues 94–138 (NIPLLLYHLWRFFHRPADGSEVMYDPVSVMNADILNYCQKESWCK) are Cytoplasmic-facing. Residues 139 to 159 (LGFYLLSFFYYLYSMVYALVS) form a helical membrane-spanning segment. Position 160 (Phe160) is a topological domain, lumenal.

This sequence belongs to the cornichon family.

It localises to the membrane. Its function is as follows. Regulates the trafficking and gating properties of AMPA-selective glutamate receptors (AMPARs). This Danio rerio (Zebrafish) protein is Protein cornichon homolog 2 (cnih2).